Consider the following 258-residue polypeptide: Pyridoxine 5'-phosphate synthase (258 aa).

Asparagine 6 serves as a coordination point for 3-amino-2-oxopropyl phosphate. 8–9 lines the 1-deoxy-D-xylulose 5-phosphate pocket; it reads DH. Position 17 (arginine 17) interacts with 3-amino-2-oxopropyl phosphate. Residue histidine 42 is the Proton acceptor of the active site. Residues arginine 44 and histidine 49 each coordinate 1-deoxy-D-xylulose 5-phosphate. Glutamate 69 serves as the catalytic Proton acceptor. 1-deoxy-D-xylulose 5-phosphate is bound at residue threonine 99. Histidine 213 functions as the Proton donor in the catalytic mechanism. Residues glycine 214 and 235 to 236 each bind 3-amino-2-oxopropyl phosphate; that span reads GQ.

Belongs to the PNP synthase family. In terms of assembly, homooctamer; tetramer of dimers.

It is found in the cytoplasm. It carries out the reaction 3-amino-2-oxopropyl phosphate + 1-deoxy-D-xylulose 5-phosphate = pyridoxine 5'-phosphate + phosphate + 2 H2O + H(+). The protein operates within cofactor biosynthesis; pyridoxine 5'-phosphate biosynthesis; pyridoxine 5'-phosphate from D-erythrose 4-phosphate: step 5/5. Functionally, catalyzes the complicated ring closure reaction between the two acyclic compounds 1-deoxy-D-xylulose-5-phosphate (DXP) and 3-amino-2-oxopropyl phosphate (1-amino-acetone-3-phosphate or AAP) to form pyridoxine 5'-phosphate (PNP) and inorganic phosphate. The chain is Pyridoxine 5'-phosphate synthase from Sulfurovum sp. (strain NBC37-1).